The following is a 137-amino-acid chain: Protein cornichon homolog 4 (137 aa).

3 helical membrane passes run 8–28 (LISFFFLIALVGIIVYQLVCL), 53–73 (FIVQGVLCVFYLLTGHWFMTL), and 113–133 (LAYIVLNLFLTIFWMIYSALD).

It belongs to the cornichon family.

The protein resides in the membrane. The sequence is that of Protein cornichon homolog 4 from Arabidopsis thaliana (Mouse-ear cress).